The following is a 528-amino-acid chain: Potassium voltage-gated channel subfamily A member 3 (528 aa).

The interval 1–32 is disordered; the sequence is MTVVPGDHLLEPEAAGGGGGDPPQGGCGSGGG. At 1 to 187 the chain is on the cytoplasmic side; sequence MTVVPGDHLL…EYPESSGPAR (187 aa). Over residues 15-32 the composition is skewed to gly residues; sequence AGGGGGDPPQGGCGSGGG. Residues 188-206 traverse the membrane as a helical segment; that stretch reads GIAIVSVLVILISIVIFCL. The Extracellular segment spans residues 207-247; it reads ETLPEFRDEKDYPASPSQDVFEAANNSTSGAPSGASSFSDP. An N-linked (GlcNAc...) asparagine glycan is attached at Asn232. The chain crosses the membrane as a helical span at residues 248–269; it reads FFVVETLCIIWFSFELLVRFFA. Cys270 carries S-palmitoyl cysteine lipidation. Residues 270–280 lie on the Cytoplasmic side of the membrane; that stretch reads CPSKATFSRNI. Residues 281–301 form a helical membrane-spanning segment; that stretch reads MNLIDIVAIIPYFITLGTELA. The Extracellular segment spans residues 302–315; it reads ERQGNGQQAMSLAI. Residues 316–334 form a helical; Voltage-sensor membrane-spanning segment; it reads LRVIRLVRVFRIFKLSRHS. The Cytoplasmic portion of the chain corresponds to 335 to 350; the sequence is KGLQILGQTLKASMRE. Residues 351–370 form a helical membrane-spanning segment; the sequence is LGLLIFFLFIGVILFSSAVY. The Extracellular portion of the chain corresponds to 371–411; that stretch reads FAEADDPSSGFNSIPDAFWWAVVTMTTVGYGDMHPVTIGGK. A Selectivity filter motif is present at residues 397-402; the sequence is TVGYGD. A helical transmembrane segment spans residues 412–434; the sequence is IVGSLCAIAGVLTIALPVPVIVS. Residues 435–528 are Cytoplasmic-facing; sequence NFNYFYHRET…VNIKKIFTDV (94 aa). The tract at residues 435–528 is interaction with KCNE4; it reads NFNYFYHRET…VNIKKIFTDV (94 aa). Position 452 is a phosphotyrosine (Tyr452). Ser473 bears the Phosphoserine; by PKA mark. Residues 526–528 carry the PDZ-binding motif; the sequence is TDV.

It belongs to the potassium channel family. A (Shaker) (TC 1.A.1.2) subfamily. Kv1.3/KCNA3 sub-subfamily. In terms of assembly, homotetramer. Forms heterooligomers with KCNE4 which inhibits KCNA3 activity by impairing localization to the cell membrane. The stoichiometry of KCNA3 and KCNE4 in the heterooligomers are 4:1, 4:2, 4:3 or 4:4 respectively. Increasing the number of KCNE4 subunits steadily slows the activation KCNA3 and decreases its abundance at the cell membrane. However, a single subunit of KCNE4 is sufficient for the cooperative enhancement of the inactivating function of the channel. Interacts with SEC24D; this interaction is reduced in the presence of KCNE4. Interacts with DLG1, DLG2 and DLG4 via their PDZ domains. Post-translationally, N-glycosylation promotes the cell surface expression. Phosphorylation on Tyr-452 inhibits its channel activity.

It is found in the cell membrane. It catalyses the reaction K(+)(in) = K(+)(out). Its activity is regulated as follows. Activity is up-regulated by JAK2. Its function is as follows. Mediates the voltage-dependent potassium ion permeability of excitable membranes. Assuming opened or closed conformations in response to the voltage difference across the membrane, the protein forms a potassium-selective channel through which potassium ions may pass in accordance with their electrochemical gradient. This Mus musculus (Mouse) protein is Potassium voltage-gated channel subfamily A member 3 (Kcna3).